A 61-amino-acid polypeptide reads, in one-letter code: Small ribosomal subunit protein uS14C (61 aa).

4 residues coordinate Zn(2+): C24, C27, C40, and C43.

Belongs to the universal ribosomal protein uS14 family. Zinc-binding uS14 subfamily. Part of the 30S ribosomal subunit. Contacts proteins S3 and S10. The cofactor is Zn(2+).

Its function is as follows. Binds 16S rRNA, required for the assembly of 30S particles and may also be responsible for determining the conformation of the 16S rRNA at the A site. This chain is Small ribosomal subunit protein uS14C, found in Bacillus licheniformis (strain ATCC 14580 / DSM 13 / JCM 2505 / CCUG 7422 / NBRC 12200 / NCIMB 9375 / NCTC 10341 / NRRL NRS-1264 / Gibson 46).